We begin with the raw amino-acid sequence, 142 residues long: Transcriptional regulator MraZ (142 aa).

SpoVT-AbrB domains follow at residues 5–47 (EYPY…PLAS) and 76–119 (ANKA…NPGR).

Belongs to the MraZ family. As to quaternary structure, forms oligomers.

The protein resides in the cytoplasm. It is found in the nucleoid. This chain is Transcriptional regulator MraZ, found in Deinococcus deserti (strain DSM 17065 / CIP 109153 / LMG 22923 / VCD115).